Consider the following 153-residue polypeptide: MGRPPKCRRVEFIPQCTYFKPAGIPLWNLEEVGLAVEEVEALRLKDLEGLEQEDCAERMGISRPTFQRILTGARSKVAQALVTGRAIRVEGGNFEYVARRLRCTGCRAEWEPDPSDLNEQQCPKCGGKELMTRPERCSRPKRGAGKYRVPKKR.

Positions 129–138 (ELMTRPERCS) are enriched in basic and acidic residues. Residues 129–153 (ELMTRPERCSRPKRGAGKYRVPKKR) form a disordered region. The span at 139 to 153 (RPKRGAGKYRVPKKR) shows a compositional bias: basic residues.

This sequence belongs to the UPF0251 family.

The protein is UPF0251 protein Daud_0090 of Desulforudis audaxviator (strain MP104C).